Here is a 209-residue protein sequence, read N- to C-terminus: Iron-sulfur cluster assembly 2 homolog, mitochondrial (209 aa).

The N-terminal 27 residues, 1-27, are a transit peptide targeting the mitochondrion; sequence MIRSIFKKNSSLPYFLKRSFITKPHSI. Fe cation is bound by residues cysteine 134, cysteine 199, and cysteine 201.

The protein belongs to the HesB/IscA family. Fe cation serves as cofactor.

Its subcellular location is the mitochondrion. Involved in the maturation of mitochondrial 4Fe-4S proteins functioning late in the iron-sulfur cluster assembly pathway. May be involved in the binding of an intermediate of Fe/S cluster assembly. The protein is Iron-sulfur cluster assembly 2 homolog, mitochondrial (isca2) of Dictyostelium discoideum (Social amoeba).